The primary structure comprises 600 residues: DNA mismatch repair protein MutL (600 aa).

Residues 348 to 375 are disordered; sequence QPQAQRPQTAWSAETSPFRPYQPTTGFS. Residues 349–362 are compositionally biased toward polar residues; that stretch reads PQAQRPQTAWSAET.

The protein belongs to the DNA mismatch repair MutL/HexB family.

In terms of biological role, this protein is involved in the repair of mismatches in DNA. It is required for dam-dependent methyl-directed DNA mismatch repair. May act as a 'molecular matchmaker', a protein that promotes the formation of a stable complex between two or more DNA-binding proteins in an ATP-dependent manner without itself being part of a final effector complex. In Rhizobium leguminosarum bv. trifolii (strain WSM2304), this protein is DNA mismatch repair protein MutL.